The following is a 201-amino-acid chain: Retinol-binding protein 4 (201 aa).

A signal peptide spans 1 to 18 (MEWVWALVLLAALGGGSA). 3 disulfides stabilise this stretch: Cys22/Cys178, Cys88/Cys192, and Cys138/Cys147. Gln116 contributes to the substrate binding site. At Arg139 the chain carries Omega-N-methylarginine.

The protein belongs to the calycin superfamily. Lipocalin family. As to quaternary structure, interacts with TTR. Interaction with TTR prevents its loss by filtration through the kidney glomeruli. Interacts with STRA6. In terms of tissue distribution, detected in blood plasma (at protein level).

The protein localises to the secreted. Retinol-binding protein that mediates retinol transport in blood plasma. Delivers retinol from the liver stores to the peripheral tissues. Transfers the bound all-trans retinol to STRA6, that then facilitates retinol transport across the cell membrane. The chain is Retinol-binding protein 4 (Rbp4) from Rattus norvegicus (Rat).